A 265-amino-acid polypeptide reads, in one-letter code: Palmitoyltransferase ZDHHC21 (265 aa).

Over 1-16 (MGLRIHFVVDPHGWCC) the chain is Cytoplasmic. The helical transmembrane segment at 17-37 (MGLIVFVWLYNFFLIPKIVLF) threads the bilayer. The Extracellular segment spans residues 38–44 (PHYEEGH). The helical transmembrane segment at 45 to 65 (IPGILIIIFYGIAMFCLVALV) threads the bilayer. At 66 to 133 (RASITDPGRL…NNCVGEDNHW (68 aa)) the chain is on the cytoplasmic side. The region spanning 90–140 (ELCNKCNLMRPKRSHHCSRCGHCVRRMDHHCPWINNCVGEDNHWLFLQLCF) is the DHHC domain. The active-site S-palmitoyl cysteine intermediate is the Cys120. The helical transmembrane segment at 134-154 (LFLQLCFYTELLTCYALMFSF) threads the bilayer. The Extracellular segment spans residues 155 to 185 (CHYYYFLPLKKRNLDLFVVRHELAIMRLAAF). The helical transmembrane segment at 186–206 (MGITMLVGITGLFYTQLIGII) threads the bilayer. The Cytoplasmic portion of the chain corresponds to 207 to 265 (TDTTSIEKMSNCCEEISRPRKPWQQTFSEVFGTRWKILWFIPFRRRQPLRVPYHFANHV).

It belongs to the DHHC palmitoyltransferase family.

Its subcellular location is the golgi apparatus membrane. The protein localises to the golgi apparatus. It localises to the cis-Golgi network membrane. It is found in the cell membrane. It carries out the reaction L-cysteinyl-[protein] + hexadecanoyl-CoA = S-hexadecanoyl-L-cysteinyl-[protein] + CoA. Functionally, palmitoyltransferase that catalyzes the addition of palmitate onto various protein substrates. Palmitoylates sex steroid hormone receptors, including ESR1, PGR and AR, thereby regulating their targeting to the plasma membrane. This affects rapid intracellular signaling by sex hormones via ERK and AKT kinases and the generation of cAMP, but does not affect that mediated by their nuclear receptor. Palmitoylates FYN, regulates its localization in hair follicles and plays a key role in epidermal homeostasis and hair follicle differentiation. Through the palmitoylation of PLCB1 and the regulation of PLCB1 downstream signaling may indirectly regulate the function of the endothelial barrier and the adhesion of leukocytes to the endothelium. Also has a palmitoyltransferase activity toward ADRA1D, positively regulating its activity and expression and may thereby play a role in vascular contraction. May also palmitoylate eNOS and LCK. In Bos taurus (Bovine), this protein is Palmitoyltransferase ZDHHC21.